Reading from the N-terminus, the 485-residue chain is Glutamyl-tRNA(Gln) amidotransferase subunit A (485 aa).

Active-site charge relay system residues include Lys-79 and Ser-154. Catalysis depends on Ser-178, which acts as the Acyl-ester intermediate.

The protein belongs to the amidase family. GatA subfamily. Heterotrimer of A, B and C subunits.

It carries out the reaction L-glutamyl-tRNA(Gln) + L-glutamine + ATP + H2O = L-glutaminyl-tRNA(Gln) + L-glutamate + ADP + phosphate + H(+). In terms of biological role, allows the formation of correctly charged Gln-tRNA(Gln) through the transamidation of misacylated Glu-tRNA(Gln) in organisms which lack glutaminyl-tRNA synthetase. The reaction takes place in the presence of glutamine and ATP through an activated gamma-phospho-Glu-tRNA(Gln). This chain is Glutamyl-tRNA(Gln) amidotransferase subunit A, found in Staphylococcus aureus (strain MW2).